We begin with the raw amino-acid sequence, 243 residues long: 2-C-methyl-D-erythritol 4-phosphate cytidylyltransferase (243 aa).

This sequence belongs to the IspD/TarI cytidylyltransferase family. IspD subfamily.

It catalyses the reaction 2-C-methyl-D-erythritol 4-phosphate + CTP + H(+) = 4-CDP-2-C-methyl-D-erythritol + diphosphate. The protein operates within isoprenoid biosynthesis; isopentenyl diphosphate biosynthesis via DXP pathway; isopentenyl diphosphate from 1-deoxy-D-xylulose 5-phosphate: step 2/6. Its function is as follows. Catalyzes the formation of 4-diphosphocytidyl-2-C-methyl-D-erythritol from CTP and 2-C-methyl-D-erythritol 4-phosphate (MEP). The sequence is that of 2-C-methyl-D-erythritol 4-phosphate cytidylyltransferase from Colwellia psychrerythraea (strain 34H / ATCC BAA-681) (Vibrio psychroerythus).